Reading from the N-terminus, the 459-residue chain is Putrescine aminotransferase (459 aa).

Pyridoxal 5'-phosphate-binding positions include 150–151 (GT) and glutamine 274. The residue at position 300 (lysine 300) is an N6-(pyridoxal phosphate)lysine. Position 332 (threonine 332) interacts with pyridoxal 5'-phosphate.

This sequence belongs to the class-III pyridoxal-phosphate-dependent aminotransferase family. Putrescine aminotransferase subfamily. Requires pyridoxal 5'-phosphate as cofactor.

The enzyme catalyses an alkane-alpha,omega-diamine + 2-oxoglutarate = an omega-aminoaldehyde + L-glutamate. The catalysed reaction is putrescine + 2-oxoglutarate = 1-pyrroline + L-glutamate + H2O. It catalyses the reaction cadaverine + 2-oxoglutarate = 5-aminopentanal + L-glutamate. It participates in amine and polyamine degradation; putrescine degradation; 4-aminobutanal from putrescine (transaminase route): step 1/1. Its function is as follows. Catalyzes the aminotransferase reaction from putrescine to 2-oxoglutarate, leading to glutamate and 4-aminobutanal, which spontaneously cyclizes to form 1-pyrroline. This is the first step in one of two pathways for putrescine degradation, where putrescine is converted into 4-aminobutanoate (gamma-aminobutyrate or GABA) via 4-aminobutanal. Also functions as a cadaverine transaminase in a a L-lysine degradation pathway to succinate that proceeds via cadaverine, glutarate and L-2-hydroxyglutarate. In Escherichia coli O81 (strain ED1a), this protein is Putrescine aminotransferase.